Here is a 350-residue protein sequence, read N- to C-terminus: tRNA uridine(34) hydroxylase (350 aa).

The Rhodanese domain occupies 146–240 (DDPDAVFIDM…YARRARAQGL (95 aa)). C200 functions as the Cysteine persulfide intermediate in the catalytic mechanism. Positions 319-328 (RRRRAGRENG) are enriched in basic and acidic residues. The tract at residues 319–350 (RRRRAGRENGNKIFNKSRGRLNSKLSIPDPAE) is disordered.

The protein belongs to the TrhO family.

The enzyme catalyses uridine(34) in tRNA + AH2 + O2 = 5-hydroxyuridine(34) in tRNA + A + H2O. Functionally, catalyzes oxygen-dependent 5-hydroxyuridine (ho5U) modification at position 34 in tRNAs. This Salmonella typhimurium (strain LT2 / SGSC1412 / ATCC 700720) protein is tRNA uridine(34) hydroxylase.